Reading from the N-terminus, the 323-residue chain is Arginase, hepatic (323 aa).

H102, D125, H127, and D129 together coordinate Mn(2+). Residues 127-131 (HADIN), 138-140 (SGN), and D184 contribute to the substrate site. Mn(2+) contacts are provided by D233 and D235. 2 residues coordinate substrate: T247 and E278.

It belongs to the arginase family. As to quaternary structure, homotrimer. It depends on Mn(2+) as a cofactor.

The enzyme catalyses L-arginine + H2O = urea + L-ornithine. It functions in the pathway nitrogen metabolism; urea cycle; L-ornithine and urea from L-arginine: step 1/1. The protein is Arginase, hepatic of Aquarana catesbeiana (American bullfrog).